The primary structure comprises 262 residues: ATP synthase subunit a (262 aa).

The next 7 membrane-spanning stretches (helical) occupy residues 30–50 (ITSLTNIAILFIIGLLVLTIF), 64–84 (WNIVLETWVASILGIVKDQIG), 91–111 (LIYFPLIFTFFSFVFISNILG), 123–143 (ISVTLGLSIAIMIGVTLIGFS), 149–169 (FFSLFVPKGTPLALVPLLVLI), 195–215 (LFGVISALSVSACIAVSSLLL), and 220–240 (ITLPLAVLVVLYGLELLVALL).

This sequence belongs to the ATPase A chain family. As to quaternary structure, F-type ATPases have 2 components, CF(1) - the catalytic core - and CF(0) - the membrane proton channel. CF(1) has five subunits: alpha(3), beta(3), gamma(1), delta(1), epsilon(1). CF(0) has three main subunits: a, b and c.

The protein localises to the mitochondrion inner membrane. Functionally, mitochondrial membrane ATP synthase (F(1)F(0) ATP synthase or Complex V) produces ATP from ADP in the presence of a proton gradient across the membrane which is generated by electron transport complexes of the respiratory chain. F-type ATPases consist of two structural domains, F(1) - containing the extramembraneous catalytic core and F(0) - containing the membrane proton channel, linked together by a central stalk and a peripheral stalk. During catalysis, ATP synthesis in the catalytic domain of F(1) is coupled via a rotary mechanism of the central stalk subunits to proton translocation. Key component of the proton channel; it may play a direct role in the translocation of protons across the membrane. The sequence is that of ATP synthase subunit a (ATP6) from Allomyces macrogynus.